The sequence spans 118 residues: NADPH-dependent 7-cyano-7-deazaguanine reductase (118 aa).

Cysteine 31 (thioimide intermediate) is an active-site residue. Aspartate 38 functions as the Proton donor in the catalytic mechanism. Residues isoleucine 53–leucine 55 and tyrosine 72–glutamate 73 each bind substrate.

The protein belongs to the GTP cyclohydrolase I family. QueF type 1 subfamily.

The protein localises to the cytoplasm. The catalysed reaction is 7-aminomethyl-7-carbaguanine + 2 NADP(+) = 7-cyano-7-deazaguanine + 2 NADPH + 3 H(+). It functions in the pathway tRNA modification; tRNA-queuosine biosynthesis. Catalyzes the NADPH-dependent reduction of 7-cyano-7-deazaguanine (preQ0) to 7-aminomethyl-7-deazaguanine (preQ1). The chain is NADPH-dependent 7-cyano-7-deazaguanine reductase from Prosthecochloris aestuarii (strain DSM 271 / SK 413).